The following is a 77-amino-acid chain: uncharacterized protein (77 aa).

The 77-residue stretch at 1 to 77 folds into the Peptidase A1 domain; it reads MAFERQGKIE…VAILDGKLVW (77 aa).

This is an uncharacterized protein from Saccharomyces cerevisiae (strain ATCC 204508 / S288c) (Baker's yeast).